An 850-amino-acid polypeptide reads, in one-letter code: Endoribonuclease ysh-1 (850 aa).

Zn(2+) is bound by residues His-83, His-85, Asp-87, His-88, His-173, and Asp-194. Catalysis depends on His-442, which acts as the Proton donor. A Zn(2+)-binding site is contributed by His-464. Disordered stretches follow at residues 685 to 708 and 732 to 784; these read VKRS…PHSH and SPIV…EQQL. Over residues 744 to 754 the composition is skewed to polar residues; the sequence is PTTKAITSPSE. A compositionally biased stretch (basic and acidic residues) spans 755–766; that stretch reads ETAKSSDVKSDA. Over residues 767–781 the composition is skewed to acidic residues; the sequence is DADASMDVSEEDEDE.

Belongs to the metallo-beta-lactamase superfamily. RNA-metabolizing metallo-beta-lactamase-like family. CPSF2/YSH1 subfamily.

It is found in the nucleus. Its function is as follows. Component of the cleavage factor I (CF I) involved in pre-mRNA 3'-end processing. This Neurospora crassa (strain ATCC 24698 / 74-OR23-1A / CBS 708.71 / DSM 1257 / FGSC 987) protein is Endoribonuclease ysh-1 (ysh-1).